The following is a 246-amino-acid chain: Flavin-dependent thymidylate synthase (246 aa).

Positions 17-241 constitute a ThyX domain; sequence VTVELVKHSA…PLTYAAFNTN (225 aa). Residues Ser69, 92-94, and Glu101 contribute to the FAD site; that span reads RHR. DUMP is bound by residues 89–92, 101–105, and Arg173; these read EFMR and EESGR. The short motif at 92–103 is the ThyX motif element; sequence RHRVGWSYNEES. FAD-binding positions include 189–191 and His195; that span reads NAR. A dUMP-binding site is contributed by Arg200. Arg200 serves as the catalytic Involved in ionization of N3 of dUMP, leading to its activation.

Belongs to the thymidylate synthase ThyX family. As to quaternary structure, homotetramer. FAD is required as a cofactor.

The catalysed reaction is dUMP + (6R)-5,10-methylene-5,6,7,8-tetrahydrofolate + NADPH + H(+) = dTMP + (6S)-5,6,7,8-tetrahydrofolate + NADP(+). Its pathway is pyrimidine metabolism; dTTP biosynthesis. In terms of biological role, catalyzes the reductive methylation of 2'-deoxyuridine-5'-monophosphate (dUMP) to 2'-deoxythymidine-5'-monophosphate (dTMP) while utilizing 5,10-methylenetetrahydrofolate (mTHF) as the methyl donor, and NADPH and FADH(2) as the reductant. The polypeptide is Flavin-dependent thymidylate synthase (Streptomyces avermitilis (strain ATCC 31267 / DSM 46492 / JCM 5070 / NBRC 14893 / NCIMB 12804 / NRRL 8165 / MA-4680)).